The chain runs to 256 residues: Undecaprenyl-diphosphatase (256 aa).

The next 7 membrane-spanning stretches (helical) occupy residues 8–28 (VLGI…GHLI), 41–61 (FVKS…VVLY), 75–95 (IIAA…LIKG), 96–116 (FLIG…IILI), 175–195 (AEFS…YDLI), 208–228 (ILII…KWFL), and 236–256 (LKIF…FFLF).

It belongs to the UppP family.

Its subcellular location is the cell inner membrane. It catalyses the reaction di-trans,octa-cis-undecaprenyl diphosphate + H2O = di-trans,octa-cis-undecaprenyl phosphate + phosphate + H(+). In terms of biological role, catalyzes the dephosphorylation of undecaprenyl diphosphate (UPP). Confers resistance to bacitracin. This Aquifex aeolicus (strain VF5) protein is Undecaprenyl-diphosphatase.